Consider the following 216-residue polypeptide: Flagellar transcriptional regulator FlhC (216 aa).

Residues C137, C140, C157, and C160 each coordinate Zn(2+).

It belongs to the FlhC family. Heterohexamer composed of two FlhC and four FlhD subunits. Each FlhC binds a FlhD dimer, forming a heterotrimer, and a hexamer assembles by dimerization of two heterotrimers. Zn(2+) is required as a cofactor.

Its subcellular location is the cytoplasm. Its function is as follows. Functions in complex with FlhD as a master transcriptional regulator that regulates transcription of several flagellar and non-flagellar operons by binding to their promoter region. Activates expression of class 2 flagellar genes, including fliA, which is a flagellum-specific sigma factor that turns on the class 3 genes. Also regulates genes whose products function in a variety of physiological pathways. This is Flagellar transcriptional regulator FlhC from Paraburkholderia atlantica.